A 309-amino-acid polypeptide reads, in one-letter code: Homoserine kinase (309 aa).

91–101 contributes to the ATP binding site; that stretch reads PIGSGLGSSAC.

The protein belongs to the GHMP kinase family. Homoserine kinase subfamily.

It is found in the cytoplasm. The enzyme catalyses L-homoserine + ATP = O-phospho-L-homoserine + ADP + H(+). The protein operates within amino-acid biosynthesis; L-threonine biosynthesis; L-threonine from L-aspartate: step 4/5. Its function is as follows. Catalyzes the ATP-dependent phosphorylation of L-homoserine to L-homoserine phosphate. The protein is Homoserine kinase of Salmonella dublin (strain CT_02021853).